The sequence spans 570 residues: Multidrug and toxin extrusion protein 1 (570 aa).

An N-acetylmethionine modification is found at Met-1. The Cytoplasmic portion of the chain corresponds to 1 to 37 (MEAPEEPAPVRGGPEATLEIHGSRFLRLSAFREELRA). Residues 38–58 (LLVLAGPAFLVQLMVFLISFI) form a helical membrane-spanning segment. At 59–72 (SSVFCGHLGKLELD) the chain is on the extracellular side. Residues 73–93 (AVTLAIAVINVTGVSVGFGLS) form a helical membrane-spanning segment. The Cytoplasmic segment spans residues 94–120 (SACDTLISQTYGSQNLKHVGVILQRSA). A helical membrane pass occupies residues 121-141 (LILLLCCFPCWALFLNTQHIL). Topologically, residues 142-152 (LLFRQDPDVSR) are extracellular. The chain crosses the membrane as a helical span at residues 153 to 173 (LTQTYVTIFIPALPATFLYML). At 174-176 (QVK) the chain is on the cytoplasmic side. A helical membrane pass occupies residues 177 to 197 (YLLNQGIVLPQIVTGVAANLV). Over 198–216 (NALANYLFLHQLHLGAIGS) the chain is Extracellular. A helical transmembrane segment spans residues 217-237 (ALANLISQYTLALLLFFYILG). At 238 to 251 (KKLHQATWGGWSLE) the chain is on the cytoplasmic side. Residues 252–272 (CLQDWASFLHLAVPSMLMLCM) traverse the membrane as a helical segment. Over 273–295 (EWWAYEVGSFLSGILGMVELGAQ) the chain is Extracellular. The helical transmembrane segment at 296 to 316 (SIVYELAIIVYMVPAGFSVAA) threads the bilayer. The Cytoplasmic segment spans residues 317–336 (SVRVGNALGAGDMEQARKSS). Residues 337–357 (TVSLLITVLFAVAFSVLLLSC) traverse the membrane as a helical segment. At 358–370 (KDHVGYIFTTDRD) the chain is on the extracellular side. Residues 371 to 391 (IINLVAQVVPIYAVSHLFEAL) traverse the membrane as a helical segment. The Cytoplasmic segment spans residues 392–408 (ACTSGGVLRGSGNQKVG). A helical membrane pass occupies residues 409–429 (AIVNTIGYYVVGLPIGIALMF). Topologically, residues 430-437 (ATKLGVMG) are extracellular. A helical transmembrane segment spans residues 438 to 458 (LWSGIIICTVFQAVCFLGFII). At 459 to 546 (QLNWKKACQQ…LSRKQLVLRR (88 aa)) the chain is on the cytoplasmic side. Positions 508 to 534 (DVGKTGETQSDQQMRQEEPLPEHPQDS) are disordered. The segment covering 521–533 (MRQEEPLPEHPQD) has biased composition (basic and acidic residues). A helical membrane pass occupies residues 547–567 (GLLLLGVFLILLVGILVRFYV). Residues 568-570 (RIQ) are Extracellular-facing.

Belongs to the multi antimicrobial extrusion (MATE) (TC 2.A.66.1) family.

It is found in the cell membrane. It localises to the apical cell membrane. The catalysed reaction is thiamine(out) + H(+)(in) = thiamine(in) + H(+)(out). It catalyses the reaction estrone 3-sulfate(in) + H(+)(out) = estrone 3-sulfate(out) + H(+)(in). It carries out the reaction creatinine(in) + H(+)(out) = creatinine(out) + H(+)(in). The enzyme catalyses agmatine(in) + H(+)(out) = agmatine(out) + H(+)(in). In terms of biological role, multidrug efflux pump that functions as a H(+)/organic cation antiporter. Plays a physiological role in the excretion of cationic compounds including endogenous metabolites, drugs, toxins through the kidney and liver, into urine and bile respectively. Mediates the efflux of endogenous compounds such as creatinine, vitamin B1/thiamine, agmatine and estrone-3-sulfate. May also contribute to regulate the transport of cationic compounds in testis across the blood-testis-barrier. The protein is Multidrug and toxin extrusion protein 1 (SLC47A1) of Pongo abelii (Sumatran orangutan).